Reading from the N-terminus, the 414-residue chain is Serine hydroxymethyltransferase (414 aa).

(6S)-5,6,7,8-tetrahydrofolate contacts are provided by residues L121 and G125 to L127. Residue K229 is modified to N6-(pyridoxal phosphate)lysine.

Belongs to the SHMT family. In terms of assembly, homodimer. The cofactor is pyridoxal 5'-phosphate.

It localises to the cytoplasm. It carries out the reaction (6R)-5,10-methylene-5,6,7,8-tetrahydrofolate + glycine + H2O = (6S)-5,6,7,8-tetrahydrofolate + L-serine. It functions in the pathway one-carbon metabolism; tetrahydrofolate interconversion. It participates in amino-acid biosynthesis; glycine biosynthesis; glycine from L-serine: step 1/1. Catalyzes the reversible interconversion of serine and glycine with tetrahydrofolate (THF) serving as the one-carbon carrier. This reaction serves as the major source of one-carbon groups required for the biosynthesis of purines, thymidylate, methionine, and other important biomolecules. Also exhibits THF-independent aldolase activity toward beta-hydroxyamino acids, producing glycine and aldehydes, via a retro-aldol mechanism. This Acidovorax ebreus (strain TPSY) (Diaphorobacter sp. (strain TPSY)) protein is Serine hydroxymethyltransferase.